The following is a 1110-amino-acid chain: Error-prone DNA polymerase (1110 aa).

The disordered stretch occupies residues 1072–1110 (LGELHEPLNDDRREHPDNPAQRIRHPRDVRILPPSRDFH). 2 stretches are compositionally biased toward basic and acidic residues: residues 1073–1088 (GELHEPLNDDRREHPD) and 1097–1110 (PRDVRILPPSRDFH).

It belongs to the DNA polymerase type-C family. DnaE2 subfamily.

It is found in the cytoplasm. It carries out the reaction DNA(n) + a 2'-deoxyribonucleoside 5'-triphosphate = DNA(n+1) + diphosphate. DNA polymerase involved in damage-induced mutagenesis and translesion synthesis (TLS). It is not the major replicative DNA polymerase. The polypeptide is Error-prone DNA polymerase (Rhodopseudomonas palustris (strain BisB5)).